Here is a 262-residue protein sequence, read N- to C-terminus: tRNA (guanine-N(1)-)-methyltransferase (262 aa).

Residues Gly-113 and 137–142 (IGDYVL) contribute to the S-adenosyl-L-methionine site.

It belongs to the RNA methyltransferase TrmD family. In terms of assembly, homodimer.

The protein localises to the cytoplasm. It carries out the reaction guanosine(37) in tRNA + S-adenosyl-L-methionine = N(1)-methylguanosine(37) in tRNA + S-adenosyl-L-homocysteine + H(+). Specifically methylates guanosine-37 in various tRNAs. The chain is tRNA (guanine-N(1)-)-methyltransferase from Saccharopolyspora erythraea (strain ATCC 11635 / DSM 40517 / JCM 4748 / NBRC 13426 / NCIMB 8594 / NRRL 2338).